Reading from the N-terminus, the 224-residue chain is Putative adhesin A1C_06425 (224 aa).

The signal sequence occupies residues 1–22 (MKKLLLIATTSATILSSSISFA).

The polypeptide is Putative adhesin A1C_06425 (Rickettsia akari (strain Hartford)).